The primary structure comprises 445 residues: 3-phosphoshikimate 1-carboxyvinyltransferase (445 aa).

Positions 1 to 25 (MTDSNQPMPLQARKSGALHGTARVP) are disordered. 3-phosphoshikimate-binding residues include K28, S29, and R33. K28 provides a ligand contact to phosphoenolpyruvate. G101 and R129 together coordinate phosphoenolpyruvate. 4 residues coordinate 3-phosphoshikimate: S175, Q177, D328, and K355. Q177 lines the phosphoenolpyruvate pocket. D328 acts as the Proton acceptor in catalysis. Positions 359 and 402 each coordinate phosphoenolpyruvate.

It belongs to the EPSP synthase family. As to quaternary structure, monomer.

Its subcellular location is the cytoplasm. The catalysed reaction is 3-phosphoshikimate + phosphoenolpyruvate = 5-O-(1-carboxyvinyl)-3-phosphoshikimate + phosphate. The protein operates within metabolic intermediate biosynthesis; chorismate biosynthesis; chorismate from D-erythrose 4-phosphate and phosphoenolpyruvate: step 6/7. Catalyzes the transfer of the enolpyruvyl moiety of phosphoenolpyruvate (PEP) to the 5-hydroxyl of shikimate-3-phosphate (S3P) to produce enolpyruvyl shikimate-3-phosphate and inorganic phosphate. The sequence is that of 3-phosphoshikimate 1-carboxyvinyltransferase from Rhodopseudomonas palustris (strain ATCC BAA-98 / CGA009).